Reading from the N-terminus, the 656-residue chain is UvrABC system protein B (656 aa).

Positions 24–409 (QGVRNRTPSQ…QGHIVEQILR (386 aa)) constitute a Helicase ATP-binding domain. 37 to 44 (GTTGSGKT) provides a ligand contact to ATP. A Beta-hairpin motif is present at residues 90-113 (YYDYYQPEAYIARNDTYIEKSLLI). A Helicase C-terminal domain is found at 426–589 (QVDDLLEEIR…ITPKPIIKAI (164 aa)). Positions 616 to 651 (EKLIKKYENLMLQAANAFRFDEAAQYRDKMKAAKEQ) constitute a UVR domain.

The protein belongs to the UvrB family. As to quaternary structure, forms a heterotetramer with UvrA during the search for lesions. Interacts with UvrC in an incision complex.

The protein localises to the cytoplasm. Its function is as follows. The UvrABC repair system catalyzes the recognition and processing of DNA lesions. A damage recognition complex composed of 2 UvrA and 2 UvrB subunits scans DNA for abnormalities. Upon binding of the UvrA(2)B(2) complex to a putative damaged site, the DNA wraps around one UvrB monomer. DNA wrap is dependent on ATP binding by UvrB and probably causes local melting of the DNA helix, facilitating insertion of UvrB beta-hairpin between the DNA strands. Then UvrB probes one DNA strand for the presence of a lesion. If a lesion is found the UvrA subunits dissociate and the UvrB-DNA preincision complex is formed. This complex is subsequently bound by UvrC and the second UvrB is released. If no lesion is found, the DNA wraps around the other UvrB subunit that will check the other stand for damage. This chain is UvrABC system protein B, found in Chlamydia abortus (strain DSM 27085 / S26/3) (Chlamydophila abortus).